We begin with the raw amino-acid sequence, 438 residues long: ATP synthase subunit alpha, chloroplastic (438 aa).

An ATP-binding site is contributed by Gly170–Thr177.

This sequence belongs to the ATPase alpha/beta chains family. F-type ATPases have 2 components, CF(1) - the catalytic core - and CF(0) - the membrane proton channel. CF(1) has five subunits: alpha(3), beta(3), gamma(1), delta(1), epsilon(1). CF(0) has four main subunits: a, b, b' and c.

It is found in the plastid. The protein localises to the chloroplast thylakoid membrane. It carries out the reaction ATP + H2O + 4 H(+)(in) = ADP + phosphate + 5 H(+)(out). Produces ATP from ADP in the presence of a proton gradient across the membrane. The alpha chain is a regulatory subunit. The chain is ATP synthase subunit alpha, chloroplastic from Ochrosphaera neapolitana.